Reading from the N-terminus, the 372-residue chain is DNA replication and repair protein RecF (372 aa).

30 to 37 provides a ligand contact to ATP; sequence GENAQGKT.

This sequence belongs to the RecF family.

It localises to the cytoplasm. Functionally, the RecF protein is involved in DNA metabolism; it is required for DNA replication and normal SOS inducibility. RecF binds preferentially to single-stranded, linear DNA. It also seems to bind ATP. In Shouchella clausii (strain KSM-K16) (Alkalihalobacillus clausii), this protein is DNA replication and repair protein RecF.